The primary structure comprises 487 residues: G-patch domain and KOW motifs-containing protein (487 aa).

Disordered regions lie at residues 65–121 (HKNR…PLLM), 181–232 (VKPL…TGSA), and 295–367 (KVHQ…RPEP). The stretch at 88–116 (AVLSQAVKELIEESRRAQEDNSETNQTLS) forms a coiled coil. Basic and acidic residues-rich tracts occupy residues 96 to 106 (ELIEESRRAQE) and 200 to 209 (SALKHLEPQK). The G-patch domain occupies 154-200 (VQQYGMAMLRGMGWKEGEGIGRTFKQDVKPLEQKLRPKGLGLGADRS). One can recognise a KOW 1 domain in the interval 226-253 (GLGTGSAVQIQSGAYKDMYGKVEGIDPD). 2 stretches are compositionally biased toward basic and acidic residues: residues 295–333 (KVHQESKVEPHRDRTPEKEQGRKGGEKRSESSRNADVKL) and 352–367 (RSPEQEKEKKKIRPEP). The 28-residue stretch at 428–455 (PKEEGEHVMVVLGKYRGMVGKILHRDKQ) folds into the KOW 2 domain.

The protein belongs to the MOS2 family. Component of the minor spliceosome, which splices U12-type introns.

The protein localises to the nucleus. Its function is as follows. RNA-binding protein involved in pre-mRNA splicing. The protein is G-patch domain and KOW motifs-containing protein (gpkow) of Xenopus laevis (African clawed frog).